The primary structure comprises 229 residues: MSSETGPVAVDPTLRRRIEPHEFEVFFDPRELRKETCLLYEINWGGRHSIWRHTSQNTNKHVEVNFIEKFTTERYFCPNTRCSITWFLSWSPCGECSRAITEFLSRYPHVTLFIYIARLYHHADPRNRQGLRDLISSGVTIQIMTEQESGYCWRNFVNYSPSNEAHWPRYPHLWVRLYVLELYCIILGLPPCLNILRRKQPQLTFFTIALQSCHYQRLPPHILWATGLK.

The CMP/dCMP-type deaminase domain occupies 10–134 (VDPTLRRRIE…PRNRQGLRDL (125 aa)). His-61 lines the Zn(2+) pocket. The active-site Proton donor is the Glu-63. Zn(2+) is bound by residues Cys-93 and Cys-96.

This sequence belongs to the cytidine and deoxycytidylate deaminase family. Homodimer. Interacts with A1CF; form an mRNA editing complex. Interacts with RBM47; form an mRNA editing complex. Found in a complex with CELF2/CUGBP2 and A1CF. Interacts with HNRPAB. Interacts with SYNCRIP. The cofactor is Zn(2+). In terms of tissue distribution, expressed in the liver as well as small intestine.

It localises to the cytoplasm. The protein resides in the nucleus. The enzyme catalyses a cytidine in mRNA + H2O + H(+) = a uridine in mRNA + NH4(+). The catalysed reaction is cytidine(6666) in apoB mRNA + H2O + H(+) = uridine(6666) in apoB mRNA + NH4(+). Cytidine deaminase catalyzing the cytidine to uridine postranscriptional editing of a variety of mRNAs. Form complexes with cofactors that confer differential editing activity and selectivity. Responsible for the postranscriptional editing of a CAA codon for Gln to a UAA codon for stop in the apolipoprotein B mRNA. Also involved in CGA (Arg) to UGA (Stop) editing in the NF1 mRNA. May also play a role in the epigenetic regulation of gene expression by participating in DNA demethylation. In Rattus norvegicus (Rat), this protein is C-&gt;U-editing enzyme APOBEC-1.